The following is a 420-amino-acid chain: S-adenosylmethionine synthase (420 aa).

His-16 lines the ATP pocket. Mg(2+) is bound at residue Asp-18. Glu-44 is a K(+) binding site. Positions 57 and 100 each coordinate L-methionine. The interval 100–110 (QSPDIAQGVNT) is flexible loop. Residues 175-177 (DGK), 251-252 (KF), Asp-260, 266-267 (RK), Ala-283, and Lys-287 each bind ATP. Asp-260 lines the L-methionine pocket. Residue Lys-291 coordinates L-methionine.

The protein belongs to the AdoMet synthase family. As to quaternary structure, homotetramer; dimer of dimers. Requires Mg(2+) as cofactor. K(+) is required as a cofactor.

It is found in the cytoplasm. The enzyme catalyses L-methionine + ATP + H2O = S-adenosyl-L-methionine + phosphate + diphosphate. It participates in amino-acid biosynthesis; S-adenosyl-L-methionine biosynthesis; S-adenosyl-L-methionine from L-methionine: step 1/1. Functionally, catalyzes the formation of S-adenosylmethionine (AdoMet) from methionine and ATP. The overall synthetic reaction is composed of two sequential steps, AdoMet formation and the subsequent tripolyphosphate hydrolysis which occurs prior to release of AdoMet from the enzyme. This Trichormus variabilis (strain ATCC 29413 / PCC 7937) (Anabaena variabilis) protein is S-adenosylmethionine synthase.